We begin with the raw amino-acid sequence, 305 residues long: Olfactory receptor 9G9 (305 aa).

Topologically, residues methionine 1 to phenylalanine 27 are extracellular. The N-linked (GlcNAc...) asparagine glycan is linked to asparagine 5. Residues valine 28–isoleucine 48 form a helical membrane-spanning segment. Residues cysteine 49 to asparagine 64 are Cytoplasmic-facing. A helical membrane pass occupies residues leucine 65–isoleucine 85. Over serine 86–cysteine 96 the chain is Extracellular. The cysteines at positions 96 and 178 are disulfide-linked. Residues leucine 97 to methionine 117 form a helical membrane-spanning segment. The Cytoplasmic portion of the chain corresponds to alanine 118–lysine 138. Residues leucine 139 to threonine 159 form a helical membrane-spanning segment. Topologically, residues lysine 160–phenylalanine 200 are extracellular. The helical transmembrane segment at leucine 201 to isoleucine 221 threads the bilayer. Residues threonine 222–threonine 239 are Cytoplasmic-facing. A helical membrane pass occupies residues cysteine 240–leucine 260. Topologically, residues proline 261 to lysine 271 are extracellular. The helical transmembrane segment at isoleucine 272–leucine 291 threads the bilayer. The Cytoplasmic segment spans residues arginine 292–proline 305.

Belongs to the G-protein coupled receptor 1 family.

It localises to the cell membrane. Odorant receptor. The polypeptide is Olfactory receptor 9G9 (OR9G9) (Homo sapiens (Human)).